Here is a 286-residue protein sequence, read N- to C-terminus: Protein HEXIM2 (286 aa).

The segment covering 1–11 (MMATPNQTACN) has biased composition (polar residues). The disordered stretch occupies residues 1–195 (MMATPNQTAC…GEFQRKDFSE (195 aa)). A Phosphoserine modification is found at S29. Residue T32 is modified to Phosphothreonine. S39 is modified (phosphoserine). Phosphothreonine is present on T46. Residues S51, S53, S71, S76, and S81 each carry the phosphoserine modification. The span at 68 to 78 (NSRSPRTQSPG) shows a compositional bias: polar residues. The span at 87–103 (ARKKHRRRPSKRKRHWR) shows a compositional bias: basic residues. Over residues 113 to 132 (KQQRDERQSQRASRVREEMF) the composition is skewed to basic and acidic residues. Positions 140–143 (PYNT) are interaction with P-TEFb. A compositionally biased stretch (basic and acidic residues) spans 178-195 (SDGRGRAHGEFQRKDFSE). The stretch at 207-277 (GRSKQELVRD…QENQMWNREG (71 aa)) forms a coiled coil. The tract at residues 226-286 (QAEEETRRLQ…GCRCDEEPGT (61 aa)) is interaction with CCNT1, HEXIM1 and HEXIM2.

The protein belongs to the HEXIM family. In terms of assembly, homooligomer and heterooligomer with HEXIM1; probably dimeric. Core component of the 7SK RNP complex, at least composed of 7SK RNA, LARP7, MEPCE, HEXIM1 (or HEXIM2) and P-TEFb (composed of CDK9 and CCNT1/cyclin-T1). Interacts with CCNT2. In terms of tissue distribution, ubiquitously expressed with higher expression in testis. HEXIM1 and HEXIM2 are differentially expressed.

The protein localises to the nucleus. Transcriptional regulator which functions as a general RNA polymerase II transcription inhibitor. Core component of the 7SK RNP complex: in cooperation with 7SK snRNA sequesters P-TEFb in a large inactive 7SK snRNP complex preventing RNA polymerase II phosphorylation and subsequent transcriptional elongation. This Homo sapiens (Human) protein is Protein HEXIM2 (HEXIM2).